The sequence spans 789 residues: Glycerol-3-phosphate acyltransferase (789 aa).

The HXXXXD motif signature appears at 275–280 (SHRSYI).

It belongs to the GPAT/DAPAT family.

The protein localises to the cell membrane. It catalyses the reaction sn-glycerol 3-phosphate + an acyl-CoA = a 1-acyl-sn-glycero-3-phosphate + CoA. Its pathway is phospholipid metabolism; CDP-diacylglycerol biosynthesis; CDP-diacylglycerol from sn-glycerol 3-phosphate: step 1/3. In Mycobacterium tuberculosis (strain ATCC 25177 / H37Ra), this protein is Glycerol-3-phosphate acyltransferase.